A 550-amino-acid polypeptide reads, in one-letter code: (+)-germacrene D synthase (550 aa).

Residues D304, D308, and E455 each contribute to the Mg(2+) site. The DDXXD motif motif lies at 304–308; it reads DDIYD.

Belongs to the terpene synthase family. Tpsa subfamily. Mg(2+) serves as cofactor. Requires Mn(2+) as cofactor. Co(2+) is required as a cofactor. It depends on Ni(2+) as a cofactor.

It localises to the cytoplasm. The enzyme catalyses (2E,6E)-farnesyl diphosphate = (+)-germacrene D + diphosphate. It participates in secondary metabolite biosynthesis; terpenoid biosynthesis. Functionally, involved in the biosynthesis of germacrene D. Can use farnesyl diphosphate as substrate, but not geranyl diphosphate. Produces mainly (+)-germacrene D along with germacrene B and a number of minor by-products. The protein is (+)-germacrene D synthase of Zingiber officinale (Ginger).